The primary structure comprises 536 residues: CTP synthase (536 aa).

The tract at residues Met-1 to Leu-267 is amidoligase domain. Ser-13 is a binding site for CTP. Ser-13 contributes to the UTP binding site. Ser-14–Ile-19 serves as a coordination point for ATP. L-glutamine is bound at residue Tyr-54. Position 71 (Asp-71) interacts with ATP. Residues Asp-71 and Glu-141 each coordinate Mg(2+). CTP is bound by residues Asp-148–Glu-150, Lys-188–Gln-193, and Lys-224. Residues Lys-188 to Gln-193 and Lys-224 each bind UTP. Arg-240–Ala-242 contacts ATP. Residues Thr-293–Asn-535 enclose the Glutamine amidotransferase type-1 domain. Gly-355 is a binding site for L-glutamine. The Nucleophile; for glutamine hydrolysis role is filled by Cys-382. L-glutamine-binding positions include Leu-383 to Gln-386, Glu-406, and Arg-463. Catalysis depends on residues His-508 and Glu-510.

The protein belongs to the CTP synthase family. As to quaternary structure, homotetramer.

It carries out the reaction UTP + L-glutamine + ATP + H2O = CTP + L-glutamate + ADP + phosphate + 2 H(+). The catalysed reaction is L-glutamine + H2O = L-glutamate + NH4(+). The enzyme catalyses UTP + NH4(+) + ATP = CTP + ADP + phosphate + 2 H(+). Its pathway is pyrimidine metabolism; CTP biosynthesis via de novo pathway; CTP from UDP: step 2/2. With respect to regulation, allosterically activated by GTP, when glutamine is the substrate; GTP has no effect on the reaction when ammonia is the substrate. The allosteric effector GTP functions by stabilizing the protein conformation that binds the tetrahedral intermediate(s) formed during glutamine hydrolysis. Inhibited by the product CTP, via allosteric rather than competitive inhibition. Its function is as follows. Catalyzes the ATP-dependent amination of UTP to CTP with either L-glutamine or ammonia as the source of nitrogen. Regulates intracellular CTP levels through interactions with the four ribonucleotide triphosphates. In Staphylococcus aureus (strain COL), this protein is CTP synthase.